A 701-amino-acid chain; its full sequence is MPRSTPLDRVRNIGIIAHIDAGKTTTTERILFYTGRNYKIGEVHEGAATMDWMEQERERGITITAAATTAHWEYAEQRYQINIIDTPGHVDFTAEVERSLRVLDGGVVVFDAVAGVEPQSETVWRQADKYNVPRICFVNKMDRMGANFDRTVQMIVDRLGAKPVPIQLPIGAEDRFQGIIDLMENKAIFYMDDVGKVQEEREIPAELAEKAKAAREYMLEAIAETDDELMMLYLEGEELQVPELRRALRAATIGNKLVPVLCGSALKNKGVQRMLDAVVLLLPSPLEIPVTKAVRPGVDSEAEDAEFIERPADENAPFTGLVFKIMADPFVGKLAYFRVYSGKLETGSYVLNTTKNKRERVGRLLQMHANHREEIKEVYAGDIAAVVGPKDTFTGDTICSPDDPVVLESIKFPEPVISVAIEPKTKADQDKMSIALSRLAEEDPTFRLNTDVETGQTIIRGMGELHLEVIVDRMMREFKVEANVGKPQVAYRESITRSVDIDSKFVRQSGGKGQYGHVKVKFEPSGEGEGYIFVNGIVGGVVPREYVPAVEAGIREAMETGVIAGYPVVDVKATLFDGSYHDVDSSEMAFKIAASMALKDGVRKGGPQILEPIMKIEVIVPEDYMGSVIGDVNSRRGRIEGMEARGNAQVVRGFVPLANMFGYVNDLRSQTQGRATYSMEFHHYEPIPRNLQEELVEKARS.

The tr-type G domain maps to 8–286 (DRVRNIGIIA…AVVLLLPSPL (279 aa)). Residues 17–24 (AHIDAGKT), 85–89 (DTPGH), and 139–142 (NKMD) contribute to the GTP site.

The protein belongs to the TRAFAC class translation factor GTPase superfamily. Classic translation factor GTPase family. EF-G/EF-2 subfamily.

It localises to the cytoplasm. Catalyzes the GTP-dependent ribosomal translocation step during translation elongation. During this step, the ribosome changes from the pre-translocational (PRE) to the post-translocational (POST) state as the newly formed A-site-bound peptidyl-tRNA and P-site-bound deacylated tRNA move to the P and E sites, respectively. Catalyzes the coordinated movement of the two tRNA molecules, the mRNA and conformational changes in the ribosome. The sequence is that of Elongation factor G from Herpetosiphon aurantiacus (strain ATCC 23779 / DSM 785 / 114-95).